The chain runs to 385 residues: Lipoyl synthase, mitochondrial (385 aa).

Positions 107, 112, 118, 137, 141, 144, and 352 each coordinate [4Fe-4S] cluster. In terms of domain architecture, Radical SAM core spans 122-341 (KKSEATATIM…RDTALKMGFL (220 aa)).

This sequence belongs to the radical SAM superfamily. Lipoyl synthase family. It depends on [4Fe-4S] cluster as a cofactor.

Its subcellular location is the mitochondrion. It catalyses the reaction [[Fe-S] cluster scaffold protein carrying a second [4Fe-4S](2+) cluster] + N(6)-octanoyl-L-lysyl-[protein] + 2 oxidized [2Fe-2S]-[ferredoxin] + 2 S-adenosyl-L-methionine + 4 H(+) = [[Fe-S] cluster scaffold protein] + N(6)-[(R)-dihydrolipoyl]-L-lysyl-[protein] + 4 Fe(3+) + 2 hydrogen sulfide + 2 5'-deoxyadenosine + 2 L-methionine + 2 reduced [2Fe-2S]-[ferredoxin]. It functions in the pathway protein modification; protein lipoylation via endogenous pathway; protein N(6)-(lipoyl)lysine from octanoyl-[acyl-carrier-protein]: step 2/2. Its function is as follows. Catalyzes the radical-mediated insertion of two sulfur atoms into the C-6 and C-8 positions of the octanoyl moiety bound to the lipoyl domains of lipoate-dependent enzymes, thereby converting the octanoylated domains into lipoylated derivatives. The sequence is that of Lipoyl synthase, mitochondrial from Meyerozyma guilliermondii (strain ATCC 6260 / CBS 566 / DSM 6381 / JCM 1539 / NBRC 10279 / NRRL Y-324) (Yeast).